The chain runs to 266 residues: Transmembrane protein 192 (266 aa).

The Cytoplasmic portion of the chain corresponds to 1–46 (MAAAGRLEDSSLDILQSMDDDPLLDTQPLPHHSLQAQFRPRFHPLP). Position 17 is a phosphoserine (S17). The helical transmembrane segment at 47–67 (TVIIANLLLLIHVVFVVLAFL) threads the bilayer. Over 68–89 (TGVPCLYPNPTEDKCPENYTSP) the chain is Lumenal. A helical membrane pass occupies residues 90–110 (LKVQTAIILGKLILWILHLLF). Residues 111–137 (ERYVQYHHRKVRSRGYSQIYRSTRHLK) are Cytoplasmic-facing. Residues 138–158 (TLALTIHSSGNTALLLLLCVQ) traverse the membrane as a helical segment. The Lumenal portion of the chain corresponds to 159 to 171 (HSFPEPSKLYLEL). Residues 172–192 (ILAVLALELICSLSCLILYIV) form a helical membrane-spanning segment. The Cytoplasmic segment spans residues 193–266 (KIRRFNRAKP…LELATQPART (74 aa)). Y213 bears the Phosphotyrosine mark. S229 and S230 each carry phosphoserine.

This sequence belongs to the TMEM192 family. Homodimer.

Its subcellular location is the lysosome membrane. The protein resides in the late endosome. This Mus musculus (Mouse) protein is Transmembrane protein 192 (Tmem192).